A 687-amino-acid chain; its full sequence is Epithelial splicing regulatory protein 1 (687 aa).

3 RRM domains span residues 226-303 (TIIR…KATG), 327-407 (VIVR…RSTA), and 446-526 (DCIR…QCSA).

This sequence belongs to the ESRP family.

The protein resides in the nucleus. Functionally, mRNA splicing factor that regulates the formation of epithelial cell-specific isoforms. Specifically regulates the expression of FGFR2-IIIb, an epithelial cell-specific isoform of fgfr2. Acts by directly binding specific sequences in mRNAs. Binds the GU-rich sequence motifs in the ISE/ISS-3, a cis-element regulatory region present in the mRNA of fgfr2. The sequence is that of Epithelial splicing regulatory protein 1 (esrp1) from Xenopus tropicalis (Western clawed frog).